The following is a 179-amino-acid chain: Small ribosomal subunit protein uS5 (179 aa).

Residues Leu-13–Val-76 form the S5 DRBM domain. The interval Asp-160–Ala-179 is disordered.

It belongs to the universal ribosomal protein uS5 family. As to quaternary structure, part of the 30S ribosomal subunit. Contacts proteins S4 and S8.

With S4 and S12 plays an important role in translational accuracy. In terms of biological role, located at the back of the 30S subunit body where it stabilizes the conformation of the head with respect to the body. The chain is Small ribosomal subunit protein uS5 from Chloroflexus aggregans (strain MD-66 / DSM 9485).